Reading from the N-terminus, the 114-residue chain is Prefoldin subunit 6 (114 aa).

Residue Ser-2 is modified to N-acetylserine.

Belongs to the prefoldin subunit beta family. In terms of assembly, heterohexamer of two PFD-alpha type and four PFD-beta type subunits.

It is found in the nucleus. In terms of biological role, binds specifically to cytosolic chaperonin (c-CPN) and transfers target proteins to it. Binds to nascent polypeptide chain and promotes folding in an environment in which there are many competing pathways for nonnative proteins. The polypeptide is Prefoldin subunit 6 (YKE2) (Saccharomyces cerevisiae (strain ATCC 204508 / S288c) (Baker's yeast)).